Consider the following 131-residue polypeptide: D-ribose pyranase (131 aa).

Residue His20 is the Proton donor of the active site. Substrate contacts are provided by residues Asp28, His98, and Tyr120–Asn122.

It belongs to the RbsD / FucU family. RbsD subfamily. In terms of assembly, homodecamer.

The protein localises to the cytoplasm. It catalyses the reaction beta-D-ribopyranose = beta-D-ribofuranose. It functions in the pathway carbohydrate metabolism; D-ribose degradation; D-ribose 5-phosphate from beta-D-ribopyranose: step 1/2. Its function is as follows. Catalyzes the interconversion of beta-pyran and beta-furan forms of D-ribose. In Limosilactobacillus fermentum (strain NBRC 3956 / LMG 18251) (Lactobacillus fermentum), this protein is D-ribose pyranase.